Reading from the N-terminus, the 235-residue chain is UPF0702 transmembrane protein YdfS (235 aa).

2 helical membrane-spanning segments follow: residues 32 to 52 (MTIF…GLAY) and 60 to 80 (NMAI…FLSI).

This sequence belongs to the UPF0702 family.

The protein resides in the cell membrane. The sequence is that of UPF0702 transmembrane protein YdfS (ydfS) from Bacillus subtilis (strain 168).